A 414-amino-acid polypeptide reads, in one-letter code: MFSKDQTLAKTDTELWSAIQQENTRQQDHIELIASENYTSPAVMEAQGSQLTNKYAEGYPGKRYYGGCEYVDIVEQLAIDRVKKLFGAEAANVQPNSGSQANQGVFFAVLKPGDTIMGMSLAEGGHLTHGMALNMSGKWFNVVSYGLNDKEEIDYEQMERLAREHKPKMIIAGASAYALRIDFERFAKIAKEIGAYFMVDMAHYAGLIAAGEYPNPVPYADFVTSTTHKSLRGPRGGFILMKAEHEKIINSAIFPGIQGGPLMHVIAGKAVAFKEALAPEFKVYQQQVLKNADALAKALIARGLRIVSNRTESHVMLVDLRAKKITGKDAEALLGSAHITTNKNGIPNDPEKPFVSSGIRLGSPAMTTRGFKEAEATKVGNLIADVLDNPNDAATIERVKAEVKKLTDAFPVYG.

(6S)-5,6,7,8-tetrahydrofolate is bound by residues Leu-121 and 125–127 (GHL). Lys-229 carries the post-translational modification N6-(pyridoxal phosphate)lysine.

The protein belongs to the SHMT family. Homodimer. Requires pyridoxal 5'-phosphate as cofactor.

The protein resides in the cytoplasm. It catalyses the reaction (6R)-5,10-methylene-5,6,7,8-tetrahydrofolate + glycine + H2O = (6S)-5,6,7,8-tetrahydrofolate + L-serine. Its pathway is one-carbon metabolism; tetrahydrofolate interconversion. It functions in the pathway amino-acid biosynthesis; glycine biosynthesis; glycine from L-serine: step 1/1. Its function is as follows. Catalyzes the reversible interconversion of serine and glycine with tetrahydrofolate (THF) serving as the one-carbon carrier. This reaction serves as the major source of one-carbon groups required for the biosynthesis of purines, thymidylate, methionine, and other important biomolecules. Also exhibits THF-independent aldolase activity toward beta-hydroxyamino acids, producing glycine and aldehydes, via a retro-aldol mechanism. This chain is Serine hydroxymethyltransferase, found in Herminiimonas arsenicoxydans.